The sequence spans 265 residues: Undecaprenyl-diphosphatase 1 (265 aa).

7 helical membrane-spanning segments follow: residues 4 to 24, 42 to 62, 84 to 104, 108 to 128, 184 to 204, 217 to 237, and 245 to 265; these read IITA…PISS, AKTF…ILYH, FHVF…HDII, LFQP…MIFA, SEFS…LDLL, MFAV…VTFL, and LKPF…FVLL.

It belongs to the UppP family.

It localises to the cell membrane. It carries out the reaction di-trans,octa-cis-undecaprenyl diphosphate + H2O = di-trans,octa-cis-undecaprenyl phosphate + phosphate + H(+). Catalyzes the dephosphorylation of undecaprenyl diphosphate (UPP). Confers resistance to bacitracin. This chain is Undecaprenyl-diphosphatase 1, found in Bacillus thuringiensis subsp. konkukian (strain 97-27).